A 373-amino-acid polypeptide reads, in one-letter code: Leucine aminopeptidase 1 (373 aa).

An N-terminal signal peptide occupies residues Met1–Gly18. Residues His176 and Asp195 each coordinate Zn(2+). Asn196 carries an N-linked (GlcNAc...) asparagine glycan. Glu234 and Asp261 together coordinate Zn(2+). An N-linked (GlcNAc...) asparagine glycan is attached at Asn288. A disulfide bond links Cys310 and Cys314. Residue His343 participates in Zn(2+) binding. N-linked (GlcNAc...) asparagine glycosylation occurs at Asn348.

The protein belongs to the peptidase M28 family. M28E subfamily. As to quaternary structure, monomer. Requires Zn(2+) as cofactor.

It is found in the secreted. Activity is inhibited by EDTA, o-phenanthroline, bestatin and amastatin. Extracellular aminopeptidase which contributes to pathogenicity. The polypeptide is Leucine aminopeptidase 1 (LAP1) (Trichophyton rubrum (Athlete's foot fungus)).